The sequence spans 368 residues: Glutamate 5-kinase (368 aa).

Lysine 11 contributes to the ATP binding site. Serine 51, aspartate 138, and asparagine 150 together coordinate substrate. ATP-binding positions include 170–171 (TD) and 212–218 (TGGMATK). The PUA domain occupies 276–354 (AGEIIVDHGA…QQISQILGYE (79 aa)).

The protein belongs to the glutamate 5-kinase family.

It is found in the cytoplasm. It catalyses the reaction L-glutamate + ATP = L-glutamyl 5-phosphate + ADP. Its pathway is amino-acid biosynthesis; L-proline biosynthesis; L-glutamate 5-semialdehyde from L-glutamate: step 1/2. Functionally, catalyzes the transfer of a phosphate group to glutamate to form L-glutamate 5-phosphate. The polypeptide is Glutamate 5-kinase (Photorhabdus laumondii subsp. laumondii (strain DSM 15139 / CIP 105565 / TT01) (Photorhabdus luminescens subsp. laumondii)).